The sequence spans 1112 residues: Lysylphosphatidylglycerol biosynthesis bifunctional protein LysX (1112 aa).

The tract at residues 1-613 (MTLTSPPRTR…VLHHDGTAPD (613 aa)) is phosphatidylglycerol lysyltransferase. Transmembrane regions (helical) follow at residues 18–38 (VPAA…IASV), 60–80 (FPDT…ALAA), 84–104 (IAWW…VADL), 118–138 (VIGL…RPLF), 152–172 (GVLA…LELF), 209–229 (VNAL…IVLF), and 308–328 (AWLA…ASVG). The lysine--tRNA ligase stretch occupies residues 614-1112 (MSGLRTDTAD…TLPFPLARPR (499 aa)). A DNA-binding region (OB) is located at residues 675 to 748 (VAGRVLRIRD…GTRSLLVRHW (74 aa)). Positions 1024 and 1031 each coordinate Mg(2+).

It in the N-terminal section; belongs to the LPG synthetase family. This sequence in the C-terminal section; belongs to the class-II aminoacyl-tRNA synthetase family. Requires Mg(2+) as cofactor.

The protein resides in the cell membrane. The catalysed reaction is tRNA(Lys) + L-lysine + ATP = L-lysyl-tRNA(Lys) + AMP + diphosphate. It carries out the reaction L-lysyl-tRNA(Lys) + a 1,2-diacyl-sn-glycero-3-phospho-(1'-sn-glycerol) = a 1,2-diacyl-sn-glycero-3-phospho-1'-(3'-O-L-lysyl)-sn-glycerol + tRNA(Lys). In terms of biological role, catalyzes the production of L-lysyl-tRNA(Lys)transfer and the transfer of a lysyl group from L-lysyl-tRNA(Lys) to membrane-bound phosphatidylglycerol (PG), which produces lysylphosphatidylglycerol (LPG), one of the components of the bacterial membrane with a positive net charge. LPG synthesis contributes to the resistance to cationic antimicrobial peptides (CAMPs) and likely protects M.tuberculosis against the CAMPs produced by competiting microorganisms (bacteriocins). In fact, the modification of anionic phosphatidylglycerol with positively charged L-lysine results in repulsion of the peptides. The sequence is that of Lysylphosphatidylglycerol biosynthesis bifunctional protein LysX (lysX) from Mycobacterium sp. (strain KMS).